The sequence spans 324 residues: Protein translocase subunit SecF (324 aa).

A run of 6 helical transmembrane segments spans residues 16–36, 145–165, 174–194, 201–221, 247–269, and 276–295; these read FFWAAPVTFGFSVFLMAASLV, LIRSAILAVAAACAGIAVYIW, LGSVAALIHDVLVTIGVFALF, TTVAALLTVLGYSINDTVVVF, TLSRTIMTLMTTLIALVSLLVFG, and FVFAITFGVVIGTYSSVYMA.

The protein belongs to the SecD/SecF family. SecF subfamily. Forms a complex with SecD. Part of the essential Sec protein translocation apparatus which comprises SecA, SecYEG and auxiliary proteins SecDF-YajC and YidC.

The protein localises to the cell inner membrane. In terms of biological role, part of the Sec protein translocase complex. Interacts with the SecYEG preprotein conducting channel. SecDF uses the proton motive force (PMF) to complete protein translocation after the ATP-dependent function of SecA. This is Protein translocase subunit SecF from Cereibacter sphaeroides (strain ATCC 17023 / DSM 158 / JCM 6121 / CCUG 31486 / LMG 2827 / NBRC 12203 / NCIMB 8253 / ATH 2.4.1.) (Rhodobacter sphaeroides).